An 807-amino-acid polypeptide reads, in one-letter code: Phenylalanine--tRNA ligase beta subunit (807 aa).

The region spanning 39-153 (SARAQGVVVG…SLPPNGSPVA (115 aa)) is the tRNA-binding domain. Residues 407–491 (AEAGPVLLRR…RLVGFDRFGA (85 aa)) enclose the B5 domain. Mg(2+) contacts are provided by aspartate 469, aspartate 475, glutamate 478, and glutamate 479. The FDX-ACB domain occupies 713–806 (PTVPFSERDL…LSKQFQAELR (94 aa)).

This sequence belongs to the phenylalanyl-tRNA synthetase beta subunit family. Type 1 subfamily. Tetramer of two alpha and two beta subunits. Mg(2+) serves as cofactor.

It is found in the cytoplasm. It catalyses the reaction tRNA(Phe) + L-phenylalanine + ATP = L-phenylalanyl-tRNA(Phe) + AMP + diphosphate + H(+). The chain is Phenylalanine--tRNA ligase beta subunit from Synechococcus sp. (strain CC9605).